A 302-amino-acid chain; its full sequence is Probable 2-(5''-triphosphoribosyl)-3'-dephosphocoenzyme-A synthase (302 aa).

This sequence belongs to the CitG/MdcB family.

It carries out the reaction 3'-dephospho-CoA + ATP = 2'-(5''-triphospho-alpha-D-ribosyl)-3'-dephospho-CoA + adenine. This Citrobacter koseri (strain ATCC BAA-895 / CDC 4225-83 / SGSC4696) protein is Probable 2-(5''-triphosphoribosyl)-3'-dephosphocoenzyme-A synthase.